A 354-amino-acid chain; its full sequence is tRNA N6-adenosine threonylcarbamoyltransferase (354 aa).

Fe cation-binding residues include histidine 111 and histidine 115. Substrate-binding positions include 134–138 (LVSGG), aspartate 167, glycine 180, and asparagine 279. Aspartate 319 is a binding site for Fe cation.

This sequence belongs to the KAE1 / TsaD family. It depends on Fe(2+) as a cofactor.

The protein resides in the cytoplasm. It catalyses the reaction L-threonylcarbamoyladenylate + adenosine(37) in tRNA = N(6)-L-threonylcarbamoyladenosine(37) in tRNA + AMP + H(+). Its function is as follows. Required for the formation of a threonylcarbamoyl group on adenosine at position 37 (t(6)A37) in tRNAs that read codons beginning with adenine. Is involved in the transfer of the threonylcarbamoyl moiety of threonylcarbamoyl-AMP (TC-AMP) to the N6 group of A37, together with TsaE and TsaB. TsaD likely plays a direct catalytic role in this reaction. This Neisseria meningitidis protein is tRNA N6-adenosine threonylcarbamoyltransferase.